A 1161-amino-acid polypeptide reads, in one-letter code: MGLDQEDLDLTNDDHFIDKEKLSAPIKSTADKFQLVPEFLKVRGLVKQHLDSFNYFINVGIHKIVKANSRITSTVDPSIYLRFKKVRVGEPSIINVNTVENINPHMCRLADMTYAAPIFVNIEYVHGSHGNKAKSAKDNVIIGRMPIMLRSCRCVLHGKDEEELARLGECPLDPGGYFIIKGTEKVLLIQEQLSKNRIIIDSDKKGNINASVTSSTEMTKSKTVIQMEKEKIYLFLHRFVKKIPIIIVLKAMGMESDQEIVQMVGRDPRFSASLLPSIEECVSEGVNTQKQALDYLEAKVKKISYGTPPEKDGRALSILRDLFLAHVPVPDNNFRQKCFYVGVMLRRMIEAMLNKDAMDDKDYVGNKRLELSGQLISLLFEDLFKTMLSEAIKNVDHILNKPIRASRFDFSQCLNKDSRYSISLGLERTLSTGNFDIKRFRMHRKGMTQVLTRLSFIGSMGFITKISPQFEKSRKVSGPRSLQPSQWGMLCPCDTPEGESCGLVKNLALMTHVTTDEEEGPLVAMCYKLGVTDLEVLSAEELHTPDSFLVILNGLILGKHSRPQYFANSLRRLRRAGKIGEFVSVFTNEKQHCVYVASDVGRVCRPLVIADKGISRVKQHHMKELQDGVRTFDDFIRDGLIEYLDVNEENNALIALYESDGTTELDEGAEAAKADTTHIEIEPFTILGVVAGLIPYPHHNQSPRNTYQCAMGKQAMGNIAYNQLNRMDTLLYLLVYPQRPLLTTRTIELVGYDKLGAGQNATVAVMSFSGYDIEDAIVMNKSSLDRGFGRCIVMKKIVAMSQKYDNCTADRILIPQRTGPDAEKMQILDDDGLATPGEIIRPNDIYINKQVPVDTVTKFTSALSDSQYRPAREYFKGPEGETQVVDRVALCSDKKGQLCIKYIIRHTRRPELGDKFSSRHGQKGVCGIIIQQEDFPFSELGICPDLIMNPHGFPSRMTVGKMIELLGSKAGVSCGRFHYGSAFGERSGHADKVETISATLVEKGFSYSGKDLLYSGISGEPVEAYIFMGPIYYQKLKHMVLDKMHARGSGPRVMMTRQPTEGKSKNGGLRVGEMERDCLIAYGASMLIYERLMISSDPFEVQVCRACGLLGYYNYKLKKAVCTTCKNGDNIATMKLPYACKLLFQELQSMNVVPRLKLTEA.

The segment at 1104-1125 (CRACGLLGYYNYKLKKAVCTTC) adopts a C4-type zinc-finger fold.

Belongs to the RNA polymerase beta chain family. Component of the RNA polymerase III (Pol III) complex consisting of 17 subunits.

Its subcellular location is the nucleus. It carries out the reaction RNA(n) + a ribonucleoside 5'-triphosphate = RNA(n+1) + diphosphate. Its function is as follows. DNA-dependent RNA polymerase catalyzes the transcription of DNA into RNA using the four ribonucleoside triphosphates as substrates. Second largest core component of RNA polymerase III which synthesizes small RNAs, such as 5S rRNA and tRNAs. Proposed to contribute to the polymerase catalytic activity and forms the polymerase active center together with the largest subunit. Pol III is composed of mobile elements and NRPC2 is part of the core element with the central large cleft and probably a clamp element that moves to open and close the cleft. In terms of biological role, essential for the completion of the three rounds of mitosis in female megaspores required for the development of mature gametophytes. The chain is DNA-directed RNA polymerase III subunit 2 from Arabidopsis thaliana (Mouse-ear cress).